Here is a 204-residue protein sequence, read N- to C-terminus: Guanylate kinase (204 aa).

One can recognise a Guanylate kinase-like domain in the interval 5-184; that stretch reads GLLIVLSGPS…AVQRIKDIIA (180 aa). Residue 12–19 participates in ATP binding; sequence GPSGVGKG.

It belongs to the guanylate kinase family.

It is found in the cytoplasm. The enzyme catalyses GMP + ATP = GDP + ADP. Essential for recycling GMP and indirectly, cGMP. This chain is Guanylate kinase, found in Enterococcus faecalis (strain ATCC 700802 / V583).